The sequence spans 185 residues: Ribosome maturation factor RimM (185 aa).

In terms of domain architecture, PRC barrel spans 106 to 185 (EGDYYWKDLM…SIEVDWDPGF (80 aa)).

Belongs to the RimM family. In terms of assembly, binds ribosomal protein uS19.

The protein resides in the cytoplasm. An accessory protein needed during the final step in the assembly of 30S ribosomal subunit, possibly for assembly of the head region. Essential for efficient processing of 16S rRNA. May be needed both before and after RbfA during the maturation of 16S rRNA. It has affinity for free ribosomal 30S subunits but not for 70S ribosomes. The polypeptide is Ribosome maturation factor RimM (Shigella dysenteriae serotype 1 (strain Sd197)).